Here is a 268-residue protein sequence, read N- to C-terminus: Putative hydro-lyase ACICU_01268 (268 aa).

This sequence belongs to the D-glutamate cyclase family.

This Acinetobacter baumannii (strain ACICU) protein is Putative hydro-lyase ACICU_01268.